A 60-amino-acid chain; its full sequence is Large ribosomal subunit protein uL30 (60 aa).

The protein belongs to the universal ribosomal protein uL30 family. As to quaternary structure, part of the 50S ribosomal subunit.

In Clavibacter michiganensis subsp. michiganensis (strain NCPPB 382), this protein is Large ribosomal subunit protein uL30.